We begin with the raw amino-acid sequence, 153 residues long: MLSRFMSNTWCTPLRQAQRLFSSTTTMQATLNQIKRGSGPPRRKKISTAPQLDQCPQRKGVVLRVMVLKPKKPNSAQRKACRVRLTNGNVVSAYIPGEGHDAQEHSIVYVRGGRCQDLPGVKYHVIRGAGDLSGVVNRISSRSKYGAKKPSKS.

A mitochondrion-targeting transit peptide spans 1 to 20 (MLSRFMSNTWCTPLRQAQRL).

This sequence belongs to the universal ribosomal protein uS12 family. Component of the mitochondrial small ribosomal subunit (mt-SSU). Mature yeast 74S mitochondrial ribosomes consist of a small (37S) and a large (54S) subunit. The 37S small subunit contains a 15S ribosomal RNA (15S mt-rRNA) and 34 different proteins. The 54S large subunit contains a 21S rRNA (21S mt-rRNA) and 46 different proteins. uS12m forms part of the decoding center of the mt-SSU.

Its subcellular location is the mitochondrion. Its function is as follows. Component of the mitochondrial ribosome (mitoribosome), a dedicated translation machinery responsible for the synthesis of mitochondrial genome-encoded proteins, including at least some of the essential transmembrane subunits of the mitochondrial respiratory chain. The mitoribosomes are attached to the mitochondrial inner membrane and translation products are cotranslationally integrated into the membrane. uS12m is required for respiratory growth. The polypeptide is Small ribosomal subunit protein uS12m (MRPS12) (Saccharomyces cerevisiae (strain ATCC 204508 / S288c) (Baker's yeast)).